A 273-amino-acid polypeptide reads, in one-letter code: 4-hydroxy-tetrahydrodipicolinate reductase (273 aa).

NAD(+)-binding positions include 10 to 15, Glu-36, 100 to 102, and 124 to 127; these read GAGGRM, GTT, and SGNM. His-157 acts as the Proton donor/acceptor in catalysis. His-158 contacts (S)-2,3,4,5-tetrahydrodipicolinate. Lys-161 acts as the Proton donor in catalysis. 167–168 contributes to the (S)-2,3,4,5-tetrahydrodipicolinate binding site; that stretch reads GT.

The protein belongs to the DapB family.

It localises to the cytoplasm. It carries out the reaction (S)-2,3,4,5-tetrahydrodipicolinate + NAD(+) + H2O = (2S,4S)-4-hydroxy-2,3,4,5-tetrahydrodipicolinate + NADH + H(+). The catalysed reaction is (S)-2,3,4,5-tetrahydrodipicolinate + NADP(+) + H2O = (2S,4S)-4-hydroxy-2,3,4,5-tetrahydrodipicolinate + NADPH + H(+). Its pathway is amino-acid biosynthesis; L-lysine biosynthesis via DAP pathway; (S)-tetrahydrodipicolinate from L-aspartate: step 4/4. Functionally, catalyzes the conversion of 4-hydroxy-tetrahydrodipicolinate (HTPA) to tetrahydrodipicolinate. This chain is 4-hydroxy-tetrahydrodipicolinate reductase, found in Rhodopseudomonas palustris (strain BisA53).